Here is a 181-residue protein sequence, read N- to C-terminus: Nucleoside triphosphate/diphosphate phosphatase (181 aa).

The Proton donor role is filled by Arg26. Asn90, Asp106, Asp108, Asp110, Asp123, and Glu126 together coordinate Mg(2+).

The protein belongs to the Ntdp family. Requires Mg(2+) as cofactor.

It catalyses the reaction a ribonucleoside 5'-triphosphate + H2O = a ribonucleoside 5'-diphosphate + phosphate + H(+). The catalysed reaction is a ribonucleoside 5'-diphosphate + H2O = a ribonucleoside 5'-phosphate + phosphate + H(+). Its function is as follows. Has nucleoside phosphatase activity towards nucleoside triphosphates and nucleoside diphosphates. This Staphylococcus carnosus (strain TM300) protein is Nucleoside triphosphate/diphosphate phosphatase.